Reading from the N-terminus, the 342-residue chain is L-threonine 3-dehydrogenase (342 aa).

Cys38 contacts Zn(2+). Active-site charge relay system residues include Thr40 and His43. 6 residues coordinate Zn(2+): His63, Glu64, Cys93, Cys96, Cys99, and Cys107. Residues Ile175, Asp195, Arg200, 262–264 (LGI), and 286–287 (IY) each bind NAD(+).

This sequence belongs to the zinc-containing alcohol dehydrogenase family. As to quaternary structure, homotetramer. Requires Zn(2+) as cofactor.

Its subcellular location is the cytoplasm. It carries out the reaction L-threonine + NAD(+) = (2S)-2-amino-3-oxobutanoate + NADH + H(+). It participates in amino-acid degradation; L-threonine degradation via oxydo-reductase pathway; glycine from L-threonine: step 1/2. Catalyzes the NAD(+)-dependent oxidation of L-threonine to 2-amino-3-ketobutyrate. This Burkholderia cenocepacia (strain HI2424) protein is L-threonine 3-dehydrogenase.